The primary structure comprises 985 residues: Alanine--tRNA ligase, mitochondrial (985 aa).

The N-terminal 23 residues, 1 to 23 (MAASVAAAARRLRRAIRRSPAWR), are a transit peptide targeting the mitochondrion. ATP is bound by residues R110, H128, W210, and 240–242 (LWN). L-alanine contacts are provided by N242 and D265. G269 lines the ATP pocket. Residues H632, H636, C749, and H753 each contribute to the Zn(2+) site.

It belongs to the class-II aminoacyl-tRNA synthetase family. Monomer. Zn(2+) serves as cofactor.

The protein resides in the mitochondrion. It catalyses the reaction tRNA(Ala) + L-alanine + ATP = L-alanyl-tRNA(Ala) + AMP + diphosphate. The enzyme catalyses (S)-lactate + ATP + H(+) = (S)-lactoyl-AMP + diphosphate. The catalysed reaction is (S)-lactoyl-AMP + L-lysyl-[protein] = N(6)-[(S)-lactoyl]-L-lysyl-[protein] + AMP + 2 H(+). Functionally, catalyzes the attachment of alanine to tRNA(Ala) in a two-step reaction: alanine is first activated by ATP to form Ala-AMP and then transferred to the acceptor end of tRNA(Ala). Also edits incorrectly charged tRNA(Ala) via its editing domain. In presence of high levels of lactate, also acts as a protein lactyltransferase that mediates lactylation of lysine residues in target proteins, such as CGAS. Acts as an inhibitor of cGAS/STING signaling by catalyzing lactylation of CGAS, preventing the formation of liquid-like droplets in which CGAS is activated. This is Alanine--tRNA ligase, mitochondrial from Homo sapiens (Human).